An 85-amino-acid chain; its full sequence is MAHKKAGGSTRNGRDSESKRLGVKMYGGQVIKPGNIIVRQRGTEFHAGYGVGMGKDHTLFAKIEGVIKFEKKGEFMRRYVSIVAA.

Positions 1–21 are disordered; that stretch reads MAHKKAGGSTRNGRDSESKRL.

This sequence belongs to the bacterial ribosomal protein bL27 family.

The polypeptide is Large ribosomal subunit protein bL27 (Pseudomonas entomophila (strain L48)).